Here is a 209-residue protein sequence, read N- to C-terminus: Ribosomal RNA large subunit methyltransferase E (209 aa).

Positions 63, 65, 83, 99, and 124 each coordinate S-adenosyl-L-methionine. Residue lysine 164 is the Proton acceptor of the active site.

The protein belongs to the class I-like SAM-binding methyltransferase superfamily. RNA methyltransferase RlmE family.

The protein localises to the cytoplasm. The catalysed reaction is uridine(2552) in 23S rRNA + S-adenosyl-L-methionine = 2'-O-methyluridine(2552) in 23S rRNA + S-adenosyl-L-homocysteine + H(+). Specifically methylates the uridine in position 2552 of 23S rRNA at the 2'-O position of the ribose in the fully assembled 50S ribosomal subunit. This chain is Ribosomal RNA large subunit methyltransferase E, found in Tolumonas auensis (strain DSM 9187 / NBRC 110442 / TA 4).